Reading from the N-terminus, the 249-residue chain is 5'-nucleotidase SurE (249 aa).

Residues aspartate 8, aspartate 9, serine 39, and asparagine 96 each contribute to the a divalent metal cation site.

It belongs to the SurE nucleotidase family. A divalent metal cation is required as a cofactor.

It localises to the cytoplasm. It catalyses the reaction a ribonucleoside 5'-phosphate + H2O = a ribonucleoside + phosphate. Nucleotidase that shows phosphatase activity on nucleoside 5'-monophosphates. The chain is 5'-nucleotidase SurE from Clostridium tetani (strain Massachusetts / E88).